A 300-amino-acid chain; its full sequence is Glycerol-3-phosphate dehydrogenase [NAD(P)+] (300 aa).

Positions 11, 33, and 79 each coordinate NADPH. Sn-glycerol 3-phosphate contacts are provided by lysine 79, glycine 107, and serine 109. Alanine 111 is a binding site for NADPH. The sn-glycerol 3-phosphate site is built by lysine 161, aspartate 214, serine 224, arginine 225, and asparagine 226. The active-site Proton acceptor is the lysine 161. Arginine 225 serves as a coordination point for NADPH. NADPH contacts are provided by valine 249 and glutamate 251.

This sequence belongs to the NAD-dependent glycerol-3-phosphate dehydrogenase family.

Its subcellular location is the cytoplasm. It catalyses the reaction sn-glycerol 3-phosphate + NAD(+) = dihydroxyacetone phosphate + NADH + H(+). The enzyme catalyses sn-glycerol 3-phosphate + NADP(+) = dihydroxyacetone phosphate + NADPH + H(+). The protein operates within membrane lipid metabolism; glycerophospholipid metabolism. Catalyzes the reduction of the glycolytic intermediate dihydroxyacetone phosphate (DHAP) to sn-glycerol 3-phosphate (G3P), the key precursor for phospholipid synthesis. In Campylobacter lari (strain RM2100 / D67 / ATCC BAA-1060), this protein is Glycerol-3-phosphate dehydrogenase [NAD(P)+].